We begin with the raw amino-acid sequence, 305 residues long: GTPase Era (305 aa).

The 169-residue stretch at 13–181 folds into the Era-type G domain; it reads RCGYVAIVGR…EKLVAERLPE (169 aa). Residues 21-28 form a G1 region; that stretch reads GRPNVGKS. 21 to 28 is a binding site for GTP; sequence GRPNVGKS. Positions 47 to 51 are G2; it reads QTTRH. Residues 68-71 form a G3 region; it reads DTPG. GTP is bound by residues 68-72 and 130-133; these read DTPGL and NKTD. A G4 region spans residues 130-133; it reads NKTD. A G5 region spans residues 160 to 162; it reads ISA. Residues 204 to 288 form the KH type-2 domain; that stretch reads VREKIMRQLG…MLNLWVKVKG (85 aa).

It belongs to the TRAFAC class TrmE-Era-EngA-EngB-Septin-like GTPase superfamily. Era GTPase family. As to quaternary structure, monomer.

The protein localises to the cytoplasm. The protein resides in the cell inner membrane. Its function is as follows. An essential GTPase that binds both GDP and GTP, with rapid nucleotide exchange. Plays a role in 16S rRNA processing and 30S ribosomal subunit biogenesis and possibly also in cell cycle regulation and energy metabolism. The chain is GTPase Era from Pseudomonas aeruginosa (strain LESB58).